The sequence spans 209 residues: Thymidine kinase (209 aa).

Residues 9–16 (AAMNAGKS) and 88–91 (DEAQ) contribute to the ATP site. E89 functions as the Proton acceptor in the catalytic mechanism. Positions 146, 148, 183, and 186 each coordinate Zn(2+).

The protein belongs to the thymidine kinase family. As to quaternary structure, homotetramer.

The protein localises to the cytoplasm. The catalysed reaction is thymidine + ATP = dTMP + ADP + H(+). The chain is Thymidine kinase from Legionella pneumophila (strain Lens).